We begin with the raw amino-acid sequence, 165 residues long: Ribosome maturation factor RimM (165 aa).

Residues 89 to 161 (EADTHYIVDL…KIVVKPVRQW (73 aa)) enclose the PRC barrel domain.

The protein belongs to the RimM family. Binds ribosomal protein uS19.

Its subcellular location is the cytoplasm. Functionally, an accessory protein needed during the final step in the assembly of 30S ribosomal subunit, possibly for assembly of the head region. Essential for efficient processing of 16S rRNA. May be needed both before and after RbfA during the maturation of 16S rRNA. It has affinity for free ribosomal 30S subunits but not for 70S ribosomes. In Clostridium botulinum (strain Alaska E43 / Type E3), this protein is Ribosome maturation factor RimM.